We begin with the raw amino-acid sequence, 185 residues long: Photosystem I assembly protein Ycf4 (185 aa).

2 helical membrane-spanning segments follow: residues 24–44 (YIIGGMLTIGGIGFLLASISS) and 58–78 (ALLFIPQGIIMGAYGVIANLL).

The protein belongs to the Ycf4 family.

It localises to the cellular thylakoid membrane. Seems to be required for the assembly of the photosystem I complex. The polypeptide is Photosystem I assembly protein Ycf4 (Prochlorococcus marinus (strain MIT 9215)).